The following is a 308-amino-acid chain: Growth/differentiation factor 15 (308 aa).

The N-terminal stretch at 1 to 29 is a signal peptide; it reads MPGQELKTLNGSQMLLVLLVLLWPPHGGA. The propeptide occupies 30–192; the sequence is VSLAEASRAS…HLRPRASRGR (163 aa). N-linked (GlcNAc...) asparagine glycosylation is present at N70. The segment at 152–179 is disordered; the sequence is APALHLRLSPPPSQSDQLLVKSSSSRPQ. Residues 165-178 show a composition bias toward polar residues; sequence QSDQLLVKSSSSRP. 4 disulfide bridges follow: C203-C210, C211-C274, C240-C305, and C244-C307.

This sequence belongs to the TGF-beta family. Homodimer; disulfide-linked. Interacts with GFRAL and RET; ligand of GFRAL, which mediates GDF15 internalization and cellular signaling through interaction with RET via the formation of a 2:2:2 ternary complex composed of GDF15, GFRAL and RET. Detected in plasma (at protein level).

Its subcellular location is the secreted. In terms of biological role, hormone produced in response to various stresses to confer information about those stresses to the brain, and trigger an aversive response, characterized by nausea and/or loss of appetite. The aversive response is both required to reduce continuing exposure to those stresses at the time of exposure and to promote avoidance behavior in the future. Acts by binding to its receptor, GFRAL, activating GFRAL-expressing neurons localized in the area postrema and nucleus tractus solitarius of the brainstem. It then triggers the activation of neurons localized within the parabrachial nucleus and central amygdala, which constitutes part of the 'emergency circuit' that shapes responses to stressful conditions. The GDF15-GFRAL signal induces expression of genes involved in metabolism, such as lipid metabolism in adipose tissues. Required for avoidance behavior in response to food allergens: induced downstream of mast cell activation to promote aversion and minimize harmful effects of exposure to noxious substances. In addition to suppress appetite, also promotes weight loss by enhancing energy expenditure in muscle: acts by increasing calcium futile cycling in muscle. Contributes to the effect of metformin, an anti-diabetic drug, on appetite reduction and weight loss: produced in the kidney in response to metformin treatment, thereby activating the GDF15-GFRAL response, leading to reduced appetite and weight. Produced in response to anticancer drugs, such as camptothecin or cisplatin, promoting nausea and contributing to malnutrition. Overproduced in many cancers, promoting anorexia in cancer (cachexia). Responsible for the risk of nausea during pregnancy: high levels of GDF15 during pregnancy, mostly originating from embryos, are associated with increased nausea. Maternal sensitivity to nausea is probably determined by pre-pregnancy exposure to GDF15, females with naturally high level of GDF15 being less susceptible to nausea than females with low levels of GDF15 before pregnancy. Promotes metabolic adaptation in response to systemic inflammation caused by bacterial and viral infections in order to promote tissue tolerance and prevent tissue damage. Inhibits growth hormone signaling on hepatocytes. This chain is Growth/differentiation factor 15, found in Macaca fascicularis (Crab-eating macaque).